We begin with the raw amino-acid sequence, 400 residues long: Ribose-phosphate pyrophosphokinase 2, chloroplastic (400 aa).

The N-terminal 44 residues, 1-44 (MASLALTSPPSVKIPSYLSSSSSSLFSRSSISFRTTESRSRICV), are a transit peptide targeting the chloroplast. Mg(2+) is bound by residues Asp214, His216, Asp225, and Asp229. Residues 300–315 (GKVAVMVDDIIDTAGT) form a binding of phosphoribosylpyrophosphate region.

This sequence belongs to the ribose-phosphate pyrophosphokinase family.

The protein resides in the plastid. The protein localises to the chloroplast. The catalysed reaction is D-ribose 5-phosphate + ATP = 5-phospho-alpha-D-ribose 1-diphosphate + AMP + H(+). The protein is Ribose-phosphate pyrophosphokinase 2, chloroplastic (PRS2) of Arabidopsis thaliana (Mouse-ear cress).